The sequence spans 788 residues: Bifunctional purine biosynthetic protein ADE1 (788 aa).

A GARS region spans residues 1–430 (MEPIIALLIG…DIAHHALNPK (430 aa)). Positions 115-321 (KDFMHRNNIP…LAEIILACVN (207 aa)) constitute an ATP-grasp domain. 141-202 (LDTCTFDVVI…EELLEGEELS (62 aa)) contacts ATP. The Mg(2+) site is built by Glu-291 and Asn-293. An AIRS region spans residues 437-769 (LTYENSGVSV…TVYRIGQLVD (333 aa)).

In the N-terminal section; belongs to the GARS family. It in the C-terminal section; belongs to the AIR synthase family. The cofactor is Mg(2+). Mn(2+) is required as a cofactor.

Its subcellular location is the cytoplasm. The protein resides in the cytosol. It catalyses the reaction 5-phospho-beta-D-ribosylamine + glycine + ATP = N(1)-(5-phospho-beta-D-ribosyl)glycinamide + ADP + phosphate + H(+). The enzyme catalyses 2-formamido-N(1)-(5-O-phospho-beta-D-ribosyl)acetamidine + ATP = 5-amino-1-(5-phospho-beta-D-ribosyl)imidazole + ADP + phosphate + H(+). It participates in purine metabolism; IMP biosynthesis via de novo pathway; 5-amino-1-(5-phospho-D-ribosyl)imidazole from N(2)-formyl-N(1)-(5-phospho-D-ribosyl)glycinamide: step 2/2. Its pathway is purine metabolism; IMP biosynthesis via de novo pathway; N(1)-(5-phospho-D-ribosyl)glycinamide from 5-phospho-alpha-D-ribose 1-diphosphate: step 2/2. In terms of biological role, catalyzes the second and fifth step in the 'de novo' purine biosynthesis pathway; contains phosphoribosylamine--glycine ligase (GARS) and phosphoribosylformylglycinamidine cyclo-ligase (AIRS) activities. The chain is Bifunctional purine biosynthetic protein ADE1 from Schizosaccharomyces pombe (strain 972 / ATCC 24843) (Fission yeast).